Consider the following 889-residue polypeptide: Terminal uridylyltransferase 3 (889 aa).

Residues 123-151 (VRCDLCAKMIESRDEEQIQEHFQVHHAAL) form a C2H2-type; atypical zinc finger. Positions 125, 128, 143, and 148 each coordinate Zn(2+). UTP contacts are provided by residues Ser-225 and 236–239 (SDAD). Residues Asp-237 and Asp-239 each coordinate Mg(2+). Residue Arg-286 participates in RNA binding. UTP is bound by residues 394–398 (GVRNS), Lys-419, Lys-423, and 437–438 (SY). The region spanning 505–572 (LGGLIPLFFL…LCIDDPYEDN (68 aa)) is the PAP-associated domain. The Nucleotide recognition motif (NRM) signature appears at 565–574 (IDDPYEDNFN). 2 disordered regions span residues 675 to 702 (NNKS…HVES) and 829 to 849 (RKKS…NHAG). A compositionally biased stretch (basic residues) spans 829-846 (RKKSKGSKKRKNAVRRGN).

It belongs to the DNA polymerase type-B-like family. It depends on Mg(2+) as a cofactor. The cofactor is Mn(2+).

The protein resides in the cytoplasm. The catalysed reaction is RNA(n) + UTP = RNA(n)-3'-uridine ribonucleotide + diphosphate. In terms of biological role, terminal uridylyltransferase which catalyzes the addition of Us to the 3'-hydroxyl group of single-stranded RNAs. Does not mediate RNA-independent UTP polymerization. This Trypanosoma brucei brucei protein is Terminal uridylyltransferase 3.